We begin with the raw amino-acid sequence, 179 residues long: Large ribosomal subunit protein uL5 (179 aa).

It belongs to the universal ribosomal protein uL5 family. As to quaternary structure, part of the 50S ribosomal subunit; part of the 5S rRNA/L5/L18/L25 subcomplex. Contacts the 5S rRNA and the P site tRNA. Forms a bridge to the 30S subunit in the 70S ribosome.

In terms of biological role, this is one of the proteins that bind and probably mediate the attachment of the 5S RNA into the large ribosomal subunit, where it forms part of the central protuberance. In the 70S ribosome it contacts protein S13 of the 30S subunit (bridge B1b), connecting the 2 subunits; this bridge is implicated in subunit movement. Contacts the P site tRNA; the 5S rRNA and some of its associated proteins might help stabilize positioning of ribosome-bound tRNAs. The chain is Large ribosomal subunit protein uL5 from Shewanella denitrificans (strain OS217 / ATCC BAA-1090 / DSM 15013).